The sequence spans 372 residues: Glutamine synthetase (372 aa).

Positions 26 to 105 (IIAEYVWIDS…VLAECWNNDG (80 aa)) constitute a GS beta-grasp domain. Residues 112-372 (HRHEAAKLFE…MTKEYERESL (261 aa)) form the GS catalytic domain.

The protein belongs to the glutamine synthetase family. As to quaternary structure, homooctamer.

The protein resides in the cytoplasm. The enzyme catalyses L-glutamate + NH4(+) + ATP = L-glutamine + ADP + phosphate + H(+). This Kluyveromyces lactis (strain ATCC 8585 / CBS 2359 / DSM 70799 / NBRC 1267 / NRRL Y-1140 / WM37) (Yeast) protein is Glutamine synthetase (GLN1).